Reading from the N-terminus, the 106-residue chain is Nucleoid-associated protein Smlt1015 (106 aa).

The tract at residues 81–106 (IDAESKSKMGSATAGMQLPPGMKLPF) is disordered.

It belongs to the YbaB/EbfC family. Homodimer.

The protein localises to the cytoplasm. The protein resides in the nucleoid. Its function is as follows. Binds to DNA and alters its conformation. May be involved in regulation of gene expression, nucleoid organization and DNA protection. The protein is Nucleoid-associated protein Smlt1015 of Stenotrophomonas maltophilia (strain K279a).